Here is a 779-residue protein sequence, read N- to C-terminus: Mediator of RNA polymerase II transcription subunit 15 (779 aa).

2 stretches are compositionally biased toward polar residues: residues 70–90 (NKNQQNPAGGSQDGGNPNQQG) and 98–108 (ALQTLATQGTR). 4 disordered regions span residues 70-131 (NKNQ…GGNA), 209-407 (NPMQ…VPIG), 437-512 (FLRQ…NPQE), and 629-649 (PAKQPRLAIDEPSTSGSTGSQ). The segment covering 114–130 (GQMGPGGPMGNQMGGGN) has biased composition (gly residues). 2 stretches are compositionally biased toward low complexity: residues 209–232 (NPMQMGVSGMPQGAGQQQPQQPQG) and 240–270 (PNQMNPMGGMGMQVNPGGHMNQNAINQQMNQ). Residues 274–284 (SSGGNQMGNLG) are compositionally biased toward gly residues. 3 stretches are compositionally biased toward low complexity: residues 285–295 (GNSPMNPGNMG), 304–329 (QQMPPGMNPNQQQLGMAGGQMNQMNQ), and 339–350 (GPVQQQQQPGQV). The span at 351–361 (GMAGMGPGGPG) shows a compositional bias: gly residues. Composition is skewed to low complexity over residues 362-383 (NLQQQNNPQQQSQGGPNAAPGQ), 393-402 (NMQAMGNQGN), and 451-468 (GPGSIGPQSHPGQMIPSP). Polar residues-rich tracts occupy residues 477 to 500 (QVSSNIPAPRNIGQSPGQSLNTPG) and 640 to 649 (PSTSGSTGSQ).

It belongs to the Mediator complex subunit 15 family. In terms of assembly, component of the Mediator complex.

The protein resides in the nucleus. Its function is as follows. Component of the Mediator complex, a coactivator involved in the regulated transcription of nearly all RNA polymerase II-dependent genes. Mediator functions as a bridge to convey information from gene-specific regulatory proteins to the basal RNA polymerase II transcription machinery. Mediator is recruited to promoters by direct interactions with regulatory proteins and serves as a scaffold for the assembly of a functional preinitiation complex with RNA polymerase II and the general transcription factors. In Aedes aegypti (Yellowfever mosquito), this protein is Mediator of RNA polymerase II transcription subunit 15 (MED15).